The sequence spans 95 residues: Large ribosomal subunit protein eL30 (95 aa).

This sequence belongs to the eukaryotic ribosomal protein eL30 family.

This is Large ribosomal subunit protein eL30 from Methanospirillum hungatei JF-1 (strain ATCC 27890 / DSM 864 / NBRC 100397 / JF-1).